The following is a 295-amino-acid chain: Pantothenate synthetase (295 aa).

An ATP-binding site is contributed by 29 to 36 (MGALHSGH). The active-site Proton donor is histidine 36. Position 60 (glutamine 60) interacts with (R)-pantoate. Glutamine 60 is a binding site for beta-alanine. 158 to 161 (GQKD) is an ATP binding site. Glutamine 164 serves as a coordination point for (R)-pantoate. ATP is bound by residues valine 187 and 195–198 (LSSR).

The protein belongs to the pantothenate synthetase family. As to quaternary structure, homodimer.

It localises to the cytoplasm. It catalyses the reaction (R)-pantoate + beta-alanine + ATP = (R)-pantothenate + AMP + diphosphate + H(+). It functions in the pathway cofactor biosynthesis; (R)-pantothenate biosynthesis; (R)-pantothenate from (R)-pantoate and beta-alanine: step 1/1. Its function is as follows. Catalyzes the condensation of pantoate with beta-alanine in an ATP-dependent reaction via a pantoyl-adenylate intermediate. The chain is Pantothenate synthetase from Paenarthrobacter aurescens (strain TC1).